The primary structure comprises 362 residues: Biotin synthase (362 aa).

Residues N46–R273 enclose the Radical SAM core domain. 3 residues coordinate [4Fe-4S] cluster: C61, C65, and C68. Residues C105, C136, C196, and R268 each coordinate [2Fe-2S] cluster. The disordered stretch occupies residues P320–V339.

This sequence belongs to the radical SAM superfamily. Biotin synthase family. Homodimer. The cofactor is [4Fe-4S] cluster. Requires [2Fe-2S] cluster as cofactor.

It carries out the reaction (4R,5S)-dethiobiotin + (sulfur carrier)-SH + 2 reduced [2Fe-2S]-[ferredoxin] + 2 S-adenosyl-L-methionine = (sulfur carrier)-H + biotin + 2 5'-deoxyadenosine + 2 L-methionine + 2 oxidized [2Fe-2S]-[ferredoxin]. It functions in the pathway cofactor biosynthesis; biotin biosynthesis; biotin from 7,8-diaminononanoate: step 2/2. In terms of biological role, catalyzes the conversion of dethiobiotin (DTB) to biotin by the insertion of a sulfur atom into dethiobiotin via a radical-based mechanism. This is Biotin synthase from Aeromonas hydrophila subsp. hydrophila (strain ATCC 7966 / DSM 30187 / BCRC 13018 / CCUG 14551 / JCM 1027 / KCTC 2358 / NCIMB 9240 / NCTC 8049).